Reading from the N-terminus, the 239-residue chain is Probable transcriptional regulatory protein CD630_07950 (239 aa).

This sequence belongs to the TACO1 family.

The protein resides in the cytoplasm. The sequence is that of Probable transcriptional regulatory protein CD630_07950 from Clostridioides difficile (strain 630) (Peptoclostridium difficile).